Reading from the N-terminus, the 323-residue chain is Mas-related G-protein coupled receptor member B4 (323 aa).

At 1 to 34 the chain is on the extracellular side; that stretch reads MSPTTQAWSINNTVVKENYYTEILSCITTFNTLN. The N-linked (GlcNAc...) asparagine glycan is linked to asparagine 11. Residues 35–55 form a helical membrane-spanning segment; the sequence is FLIVIISVVGMAGNATVLWLL. At 56 to 63 the chain is on the cytoplasmic side; it reads GFHMHRNA. A helical membrane pass occupies residues 64–84; sequence FSVYVLNLAGADFLYLCAQTV. At 85–98 the chain is on the extracellular side; it reads YSLECVLQFDNSYF. A helical membrane pass occupies residues 99–119; it reads YFLLTILMFNYLAGFCMIAAI. The Cytoplasmic portion of the chain corresponds to 120–147; it reads STERCLSVTWPIWYHCQRPRHTSATVCA. A helical membrane pass occupies residues 148–168; that stretch reads LFWAFSLLLSLLLGQGCGFLF. Residues 169 to 180 lie on the Extracellular side of the membrane; it reads SKFDYSFCRYCN. A helical membrane pass occupies residues 181–201; the sequence is FIATAFLIVIFMVLFVSSLAL. Residues 202–224 are Cytoplasmic-facing; the sequence is LAKIICGSHRIPVTRFYVTIALT. Residues 225–245 traverse the membrane as a helical segment; sequence VLVFIFFGLPIGICVFLLPWI. Topologically, residues 246–255 are extracellular; it reads HMMLSSFFYE. Residues 256 to 276 form a helical membrane-spanning segment; the sequence is MVTLLSCVNSCANPIIYFFVG. Topologically, residues 277–323 are cytoplasmic; it reads SIRHHRLQRQTLKLLLQRAMQDTPEEEGGERGPSQKSEDLEVVRCSS. Residues 298–323 are disordered; it reads DTPEEEGGERGPSQKSEDLEVVRCSS. Basic and acidic residues predominate over residues 312 to 323; sequence KSEDLEVVRCSS.

It belongs to the G-protein coupled receptor 1 family. Mas subfamily. Expressed strongly in newborn dorsal root ganglia, adult dorsal root ganglia and trigeminal ganlia.

The protein resides in the membrane. Orphan receptor. Probably involved in the function of nociceptive neurons. May regulate nociceptor function and/or development, including the sensation or modulation of pain. The chain is Mas-related G-protein coupled receptor member B4 (Mrgprb4) from Rattus norvegicus (Rat).